Here is a 259-residue protein sequence, read N- to C-terminus: Malonyl-[acyl-carrier protein] O-methyltransferase (259 aa).

The protein belongs to the methyltransferase superfamily.

The catalysed reaction is malonyl-[ACP] + S-adenosyl-L-methionine = malonyl-[ACP] methyl ester + S-adenosyl-L-homocysteine. The protein operates within cofactor biosynthesis; biotin biosynthesis. In terms of biological role, converts the free carboxyl group of a malonyl-thioester to its methyl ester by transfer of a methyl group from S-adenosyl-L-methionine (SAM). It allows to synthesize pimeloyl-ACP via the fatty acid synthetic pathway. The polypeptide is Malonyl-[acyl-carrier protein] O-methyltransferase (Anoxybacillus flavithermus (strain DSM 21510 / WK1)).